Consider the following 188-residue polypeptide: Elongation factor P (188 aa).

Belongs to the elongation factor P family.

It localises to the cytoplasm. It participates in protein biosynthesis; polypeptide chain elongation. In terms of biological role, involved in peptide bond synthesis. Stimulates efficient translation and peptide-bond synthesis on native or reconstituted 70S ribosomes in vitro. Probably functions indirectly by altering the affinity of the ribosome for aminoacyl-tRNA, thus increasing their reactivity as acceptors for peptidyl transferase. The chain is Elongation factor P from Saccharopolyspora erythraea (strain ATCC 11635 / DSM 40517 / JCM 4748 / NBRC 13426 / NCIMB 8594 / NRRL 2338).